A 78-amino-acid polypeptide reads, in one-letter code: MKTLLLTFLVVTIVCLDLGYTLICHQVHGLQTCEPAQKFCQKRTTMFFPNHPVLLMGCTYNCPTERYSVCCSTDKCNK.

A signal peptide spans 1 to 21 (MKTLLLTFLVVTIVCLDLGYT). Intrachain disulfides connect cysteine 24/cysteine 40, cysteine 33/cysteine 58, cysteine 62/cysteine 70, and cysteine 71/cysteine 76.

Belongs to the three-finger toxin family. Short-chain subfamily. Expressed by the venom gland.

Its subcellular location is the secreted. In terms of biological role, this three-finger toxin binds and inhibits the nicotinic acetylcholine receptor (nAChR). The chain is Short neurotoxin SNTX26 from Ophiophagus hannah (King cobra).